A 379-amino-acid chain; its full sequence is Homoserine O-acetyltransferase (379 aa).

Positions 52 to 356 (NVVMVLHALT…IRGHDGFLVE (305 aa)) constitute an AB hydrolase-1 domain. Catalysis depends on serine 157, which acts as the Nucleophile. Arginine 227 provides a ligand contact to substrate. Active-site residues include aspartate 320 and histidine 350. Aspartate 351 is a binding site for substrate.

It belongs to the AB hydrolase superfamily. MetX family. Homodimer.

The protein resides in the cytoplasm. It carries out the reaction L-homoserine + acetyl-CoA = O-acetyl-L-homoserine + CoA. It participates in amino-acid biosynthesis; L-methionine biosynthesis via de novo pathway; O-acetyl-L-homoserine from L-homoserine: step 1/1. Functionally, transfers an acetyl group from acetyl-CoA to L-homoserine, forming acetyl-L-homoserine. This Mycobacterium ulcerans (strain Agy99) protein is Homoserine O-acetyltransferase.